The primary structure comprises 510 residues: NAD(P)H-quinone oxidoreductase subunit 2 B, chloroplastic (510 aa).

A run of 13 helical transmembrane segments spans residues 24-44 (LLLFHGSFIFPECILIFGLIL), 57-77 (IPWLYFISSTSLVMSITALLF), 99-119 (IFQFLILLCSTLCIPLSVEYI), 124-144 (MAITEFLLFVLTATLGGMFLC), 150-170 (ITIFVAPECFSLCSYLLSGYT), 183-203 (YLLMGGASSSILVHGFSWLYG), 227-247 (PGISIALIFITVGIGFKLSPA), 295-315 (WHLLLEILAILSMILGNLIAI), 323-343 (MLAYSSIGQIGYVIIGIIVGD), 347-367 (GYASMITYMLFYISMNLGTFA), 395-415 (ALSSALCLLSLGGLPPLAGFF), 418-438 (LHLFWCGWQAGLYFLVSIGLL), and 484-504 (MIVCVIASTIPGISMNPIIAI).

This sequence belongs to the complex I subunit 2 family. As to quaternary structure, NDH is composed of at least 16 different subunits, 5 of which are encoded in the nucleus.

The protein resides in the plastid. It localises to the chloroplast thylakoid membrane. The enzyme catalyses a plastoquinone + NADH + (n+1) H(+)(in) = a plastoquinol + NAD(+) + n H(+)(out). It catalyses the reaction a plastoquinone + NADPH + (n+1) H(+)(in) = a plastoquinol + NADP(+) + n H(+)(out). NDH shuttles electrons from NAD(P)H:plastoquinone, via FMN and iron-sulfur (Fe-S) centers, to quinones in the photosynthetic chain and possibly in a chloroplast respiratory chain. The immediate electron acceptor for the enzyme in this species is believed to be plastoquinone. Couples the redox reaction to proton translocation, and thus conserves the redox energy in a proton gradient. In Liriodendron tulipifera (Tuliptree), this protein is NAD(P)H-quinone oxidoreductase subunit 2 B, chloroplastic.